The chain runs to 269 residues: Phosphate import ATP-binding protein PstB 2 (269 aa).

In terms of domain architecture, ABC transporter spans Leu-23–Val-264. Residue Gly-55–Ser-62 coordinates ATP.

It belongs to the ABC transporter superfamily. Phosphate importer (TC 3.A.1.7) family. As to quaternary structure, the complex is composed of two ATP-binding proteins (PstB), two transmembrane proteins (PstC and PstA) and a solute-binding protein (PstS).

The protein localises to the cell membrane. The catalysed reaction is phosphate(out) + ATP + H2O = ADP + 2 phosphate(in) + H(+). Part of the ABC transporter complex PstSACB involved in phosphate import. Responsible for energy coupling to the transport system. This is Phosphate import ATP-binding protein PstB 2 from Enterococcus faecalis (strain ATCC 700802 / V583).